Reading from the N-terminus, the 98-residue chain is Large ribosomal subunit protein eL21 (98 aa).

Residues Met-1 to Gln-23 are disordered. Residues Lys-7 to Gln-23 show a composition bias toward basic residues.

This sequence belongs to the eukaryotic ribosomal protein eL21 family.

The sequence is that of Large ribosomal subunit protein eL21 from Nanoarchaeum equitans (strain Kin4-M).